A 304-amino-acid chain; its full sequence is Protein BOBBER 1 (304 aa).

Ala2 bears the N-acetylalanine mark. Residues 54–106 are a coiled coil; the sequence is EDEIVVAVRAAKEKLKKAEKKKAEKESVKPVEKKAEKEIVKLVEKKVEKESVK. The tract at residues 111–141 is disordered; that stretch reads ASSAEPIEVEKPKEEEEKKESGPIVPNKGNG. Residues 118–131 show a composition bias toward basic and acidic residues; sequence EVEKPKEEEEKKES. The CS domain occupies 142-231; that stretch reads TDLENYSWIQ…DQMEWWKCCV (90 aa).

Expressed in all seedling tissues with highest expression levels at the root tip.

The protein localises to the cytoplasm. It is found in the cytoplasmic granule. Small heat shock protein required for the establishment of auxin gradients and for patterning of the apical domain of the embryo. Involved in the specification of the cotyledon primordia. Also required for normal inflorescence and floral meristem function, normal developmental patterning and thermotolerance. Acts as a molecular chaperone. In Arabidopsis thaliana (Mouse-ear cress), this protein is Protein BOBBER 1 (BOB1).